The chain runs to 1401 residues: MNQEVMNLFNPQVPAQTFDSIRISIASPEKILSWSYGEIKKPETINYRTFKPERDGLFCARIFGPIKDYECLCGKYKRMKYKGIICEKCGVEVTLSRVRRERMGHIELAAPVAHIWFLKSLPSRIATLLDMTLKDIERVLYFENYIVTEPGLTSLKENQLLSEEEYMIAVDEFGEDQFTAMIGAEAIYEMLASMNLEKIAGDLRSEMAETTSDLKQKKLMKRLKIVENFMESGNRPEWMIMKVVPVIPPDLRPLVPLDGGRFATSDLNDLYRRVINRNNRLKRLIELRAPGIIIRNEKRMLQESVDALFDNGRRGRVITGANKRPLKSLSDMLKGKQGRFRQNLLGKRVDYSGRSVIVTGPELKLHQCGLPKKMALELFKPFIYARLDAKGYSSTVKQAKKLVEKEKPEVWDILDEVIREHPVLLNRAPTLHRLGIQAFEPILVEGKAIQLHPLVCTAFNADFDGDQMAVHVPLSLEAQLEARVLMMSTNNILHPANGAPIIVPSQDMVLGLYYLSIMNQNEPGEGMAFSDMGELHHALETKAVTLHAKIRGRYKTVDAEGNPVSKIYETTPGRMIIGELLPKNPNVPFETCNQEMTKKNISKMIDTVYRHCGQKDTVIFCDRIMQLGFSHACRAGISFGKDDMVIPDTKVKIVGDTEALVKEYEQQYNDGLITQGEKYNKVVDAWGKATEKVAEEMMARIKAVEFDDSGRQKPMNSIYMMSHSGARGSPNQMRQLGGMRGLMAKPSGEIIETPIISNFKEGLTVNEYFNSTHGARKGLADTALKTANSGYLTRRLVDVAQDCIVTHTDCGTDKGLTMTAIVDAGQVVASIGQRILGRTALDNIDNPVTGERIVDAGKMILEPDVVAIEKAGIQSVRIRSALTCEIQTGVCGVCYGRDLARGTPVNMGEAVGVIAAQSIGEPGTQLTMRTFHLGGTATVVDQSFLEASYEGTVQIKNRNMLRNSDGVLVAMGRNMAIQILDERGVERSSQRVAYGSKIFVDDGDKVKRGQRFAEWDPYTRPMMTEVEGTVHFEDVVDGISVLESTDESTGITKRQVIDWRSTPRGTDLKPAIVIKDKNGNIAKLARGGEARFMLSVDAILSVEPGQKVSQGDVLARSPLESAKTKDITGGLPRVAELFEARRPKDHAIIAEIDGTIRFGRDYKNKRRVMIEPAEDGVEPVEYLIPKGKPFHLQDGDYIEKGDYILDGNPAPHDILAIKGVEALASYLVNEIQEVYRLQGVVINDKHIEVIVRQMLQKVEITDAGDSTYIVGDNVDRIELEDVNDSLLAEGKKPAFGEPVLLGITKASLQTPSFISAASFQETTKVLTEAAVAGKTDNLQGLKENVIVGRLIPAGTGGTMTQIRRIATARDELILEERRKGTGAESATPMLADMANDPAAAE.

Positions 71, 73, 86, and 89 each coordinate Zn(2+). Positions 462, 464, and 466 each coordinate Mg(2+). Cysteine 810, cysteine 884, cysteine 891, and cysteine 894 together coordinate Zn(2+). The disordered stretch occupies residues arginine 1377–glutamate 1401.

Belongs to the RNA polymerase beta' chain family. In terms of assembly, the RNAP catalytic core consists of 2 alpha, 1 beta, 1 beta' and 1 omega subunit. When a sigma factor is associated with the core the holoenzyme is formed, which can initiate transcription. Requires Mg(2+) as cofactor. Zn(2+) is required as a cofactor.

The enzyme catalyses RNA(n) + a ribonucleoside 5'-triphosphate = RNA(n+1) + diphosphate. DNA-dependent RNA polymerase catalyzes the transcription of DNA into RNA using the four ribonucleoside triphosphates as substrates. This Rhizobium meliloti (strain 1021) (Ensifer meliloti) protein is DNA-directed RNA polymerase subunit beta'.